The chain runs to 331 residues: Homoserine kinase (331 aa).

The protein belongs to the pseudomonas-type ThrB family.

The enzyme catalyses L-homoserine + ATP = O-phospho-L-homoserine + ADP + H(+). It functions in the pathway amino-acid biosynthesis; L-threonine biosynthesis; L-threonine from L-aspartate: step 4/5. The sequence is that of Homoserine kinase from Burkholderia pseudomallei (strain 1710b).